We begin with the raw amino-acid sequence, 332 residues long: Beta-ketoacyl-[acyl-carrier-protein] synthase III (332 aa).

Catalysis depends on residues Cys112 and His252. The segment at 253–257 is ACP-binding; sequence QANLR. The active site involves Asn282.

The protein belongs to the thiolase-like superfamily. FabH family. Homodimer.

The protein localises to the cytoplasm. It carries out the reaction malonyl-[ACP] + acetyl-CoA + H(+) = 3-oxobutanoyl-[ACP] + CO2 + CoA. It participates in lipid metabolism; fatty acid biosynthesis. Functionally, catalyzes the condensation reaction of fatty acid synthesis by the addition to an acyl acceptor of two carbons from malonyl-ACP. Catalyzes the first condensation reaction which initiates fatty acid synthesis and may therefore play a role in governing the total rate of fatty acid production. Possesses both acetoacetyl-ACP synthase and acetyl transacylase activities. Its substrate specificity determines the biosynthesis of branched-chain and/or straight-chain of fatty acids. In Syntrophomonas wolfei subsp. wolfei (strain DSM 2245B / Goettingen), this protein is Beta-ketoacyl-[acyl-carrier-protein] synthase III.